The following is a 391-amino-acid chain: MYCIGLMSGTSVDGIDAALVNISGKDLDLHIELIAGATYPYPPALREKIIAVSEGVSLSMVELAQLDDAIATQFALAAQKIQKGHPQAELIGSHGQTIYHRPPKIKRGEFSQTDLGYSLQLGRGEVITDLTGIPTVSKFRIADIAAGGQGAPLVPKVDAYLLSHPTQTRCIQNIGGIGNVTYLPPRNQENWESHVYGWDTGPGNVLIDLAVQKLTNGQKTYDENGEWAAQGKPSQDLVTKWLQYDFFYQAPPKSTGRELFGHEYLDKCWTDAIALQLPPEDFLASLVELTVASIIHNYRAFLPQMPQAVLLCGGGSHNLYLKQRLQENLGHQSQVLTTDEVGINGDYKEAITFAVLAYWRKICSFPGNLPQVTGASKPMLLGDIHLPISQI.

Residue 9–16 coordinates ATP; sequence GTSVDGID.

This sequence belongs to the anhydro-N-acetylmuramic acid kinase family.

It carries out the reaction 1,6-anhydro-N-acetyl-beta-muramate + ATP + H2O = N-acetyl-D-muramate 6-phosphate + ADP + H(+). It functions in the pathway amino-sugar metabolism; 1,6-anhydro-N-acetylmuramate degradation. Its pathway is cell wall biogenesis; peptidoglycan recycling. Its function is as follows. Catalyzes the specific phosphorylation of 1,6-anhydro-N-acetylmuramic acid (anhMurNAc) with the simultaneous cleavage of the 1,6-anhydro ring, generating MurNAc-6-P. Is required for the utilization of anhMurNAc either imported from the medium or derived from its own cell wall murein, and thus plays a role in cell wall recycling. This Gloeothece citriformis (strain PCC 7424) (Cyanothece sp. (strain PCC 7424)) protein is Anhydro-N-acetylmuramic acid kinase.